Reading from the N-terminus, the 459-residue chain is ATP-dependent protease ATPase subunit HslU (459 aa).

ATP-binding positions include Val-26, 68 to 73 (GVGKTE), Asp-271, Glu-337, and Arg-409.

It belongs to the ClpX chaperone family. HslU subfamily. As to quaternary structure, a double ring-shaped homohexamer of HslV is capped on each side by a ring-shaped HslU homohexamer. The assembly of the HslU/HslV complex is dependent on binding of ATP.

The protein resides in the cytoplasm. Its function is as follows. ATPase subunit of a proteasome-like degradation complex; this subunit has chaperone activity. The binding of ATP and its subsequent hydrolysis by HslU are essential for unfolding of protein substrates subsequently hydrolyzed by HslV. HslU recognizes the N-terminal part of its protein substrates and unfolds these before they are guided to HslV for hydrolysis. The chain is ATP-dependent protease ATPase subunit HslU from Xylella fastidiosa (strain 9a5c).